The chain runs to 1182 residues: Rho GTPase-activating protein 20 (1182 aa).

Residues 1 to 40 (MEAMSPQQDALGAQPGRSSSLTGMSRIAGGPGTKKKMKTL) are disordered. Phosphoserine is present on S46. A PH domain is found at 85–185 (TLLIDGPVEL…WLSLLQRYIA (101 aa)). Residues 194–283 (KSIPLKIFAK…TALLTQGSRD (90 aa)) form the Ras-associating domain. The Rho-GAP domain maps to 365 to 551 (VSLPDLCEND…FLIENCCRVF (187 aa)). S704 and S730 each carry phosphoserine. 6 disordered regions span residues 745 to 772 (QTQP…KRNT), 803 to 839 (VASY…QKSS), 935 to 955 (SYSS…SSQD), 982 to 1011 (TQRK…GQAS), 1074 to 1101 (LPSC…EGPG), and 1142 to 1182 (SGGQ…GTDI). A compositionally biased stretch (polar residues) spans 758–772 (KQSSVTGTDVSKRNT). Residues 811–824 (SQDHPRKQAFDADP) are compositionally biased toward basic and acidic residues.

Functionally, GTPase activator for the Rho-type GTPases by converting them to an inactive GDP-bound state. The polypeptide is Rho GTPase-activating protein 20 (Arhgap20) (Mus musculus (Mouse)).